The chain runs to 232 residues: Large ribosomal subunit protein uL1 (232 aa).

Belongs to the universal ribosomal protein uL1 family. Part of the 50S ribosomal subunit.

In terms of biological role, binds directly to 23S rRNA. The L1 stalk is quite mobile in the ribosome, and is involved in E site tRNA release. Functionally, protein L1 is also a translational repressor protein, it controls the translation of the L11 operon by binding to its mRNA. In Pelotomaculum thermopropionicum (strain DSM 13744 / JCM 10971 / SI), this protein is Large ribosomal subunit protein uL1.